Reading from the N-terminus, the 126-residue chain is Penton protein P31 (126 aa).

Its subcellular location is the virion. In association with P2 and trimeric P5, forms the spike complexes located at the 5-fold vertices of the capsid. Essential for viral infectivity. The polypeptide is Penton protein P31 (XXXI) (Acinetobacter calcoaceticus (Arthrobacter siderocapsulatus)).